The chain runs to 523 residues: Lysine--tRNA ligase (523 aa).

The 'HIGH' region motif lies at 30–38 (PSGYVHVGN). Positions 95, 99, 100, 106, 177, 180, 199, and 203 each coordinate Zn(2+). Positions 279-283 (KMSGS) match the 'KMSKS' region motif.

Belongs to the class-I aminoacyl-tRNA synthetase family. Zn(2+) is required as a cofactor.

The protein resides in the cytoplasm. The enzyme catalyses tRNA(Lys) + L-lysine + ATP = L-lysyl-tRNA(Lys) + AMP + diphosphate. The chain is Lysine--tRNA ligase (lysS) from Pyrococcus furiosus (strain ATCC 43587 / DSM 3638 / JCM 8422 / Vc1).